The following is a 164-amino-acid chain: CASP-like protein 1C1 (164 aa).

At 1–15 the chain is on the cytoplasmic side; the sequence is MGDVEIPPLVKQIVR. A helical membrane pass occupies residues 16–36; the sequence is GLRGLAFLATILATSFMAASH. Residues 37 to 56 lie on the Extracellular side of the membrane; the sequence is ERAIFPFDYKADYTDLMLFK. Residues 57 to 77 traverse the membrane as a helical segment; it reads AFLGANIAASLYSFFFVCLPP. Residues 78-83 are Cytoplasmic-facing; that stretch reads KSLLWR. The helical transmembrane segment at 84–104 threads the bilayer; sequence LAIVLDVIMFGLLVAMDSAAI. At 105–132 the chain is on the extracellular side; it reads AAAYLHKHGDSQAFWPPICSQVPTYCYR. A helical transmembrane segment spans residues 133-153; sequence VILAISIGFGGVFMFLLIIII. Topologically, residues 154-164 are cytoplasmic; the sequence is SISVILNPLLV.

The protein belongs to the Casparian strip membrane proteins (CASP) family. As to quaternary structure, homodimer and heterodimers.

The protein resides in the cell membrane. The protein is CASP-like protein 1C1 of Populus trichocarpa (Western balsam poplar).